Consider the following 428-residue polypeptide: MPIIEQVGAREILDSRGNPTVEVEVALIDGTFARAAVPSGASTGEHEAVELRDGGDRYGGKGVKKAVEAVLDEIGPAVIGLNADDQRLVDQALVDLDGTPDKSRLGGNSILGVSLAVAKAASESAELPLFRYIGGPNAHILPVPMMNILNGGAHADTGVDIQEFMVAPIGAPSFSEALRWGAEVYHALKAVLKKAGLSTGLGDEGGFAPDVASTTAALDLISQAIEAAGFKPGVDVALALDAAANEFHADGSYTFEGTPRTAAQMTEFYAGLLGSYPLVSIEDPLYENDWDGWAALTAEIGDRVQIVGDDVFVTNPERLEEGIDRGVANALLVKVNQIGTLTETLDAVALAHHSGYRTMISHRSGETEDTIIADLAVAVGSGQIKTGAPARSERVAKYNQLLRIEEALGDAARYAGDLAFPRFVADPK.

(2R)-2-phosphoglycerate is bound at residue glutamine 162. Glutamate 204 functions as the Proton donor in the catalytic mechanism. Mg(2+) contacts are provided by aspartate 241, glutamate 282, and aspartate 309. (2R)-2-phosphoglycerate is bound by residues lysine 334, arginine 363, serine 364, and lysine 385. Lysine 334 functions as the Proton acceptor in the catalytic mechanism.

Belongs to the enolase family. It depends on Mg(2+) as a cofactor.

The protein resides in the cytoplasm. Its subcellular location is the secreted. It is found in the cell surface. The enzyme catalyses (2R)-2-phosphoglycerate = phosphoenolpyruvate + H2O. Its pathway is carbohydrate degradation; glycolysis; pyruvate from D-glyceraldehyde 3-phosphate: step 4/5. In terms of biological role, catalyzes the reversible conversion of 2-phosphoglycerate (2-PG) into phosphoenolpyruvate (PEP). It is essential for the degradation of carbohydrates via glycolysis. The protein is Enolase of Mycobacterium marinum (strain ATCC BAA-535 / M).